We begin with the raw amino-acid sequence, 586 residues long: 25S rRNA (adenine-N(1))-methyltransferase (586 aa).

Disordered stretches follow at residues 23–229 and 536–573; these read GTAP…LTPL and GKCV…EVKD. Positions 25-41 are enriched in low complexity; sequence APAAPAPASAPAVSSSK. Basic and acidic residues predominate over residues 65–83; sequence LWEKVIEQKKEGVADGVKK. The segment covering 99 to 108 has biased composition (polar residues); it reads KLSNSNNDGN. Basic residues predominate over residues 114–123; sequence NNKKKNKNKN. The segment covering 144 to 163 has biased composition (acidic residues); that stretch reads GEEDEDDNNDDADEWEGIDE. Residues 164-182 show a composition bias toward basic and acidic residues; the sequence is DEKHASSEKPTPKKDDKKQ. Over residues 183 to 192 the composition is skewed to low complexity; it reads QQLQQQQQQK. Over residues 204-213 the composition is skewed to polar residues; it reads NGTTSNWQQD. Over residues 217–229 the composition is skewed to low complexity; sequence PKTATPAPKLTPL. Residues 539–549 show a composition bias toward basic and acidic residues; sequence VPKDGQEDTTK. Residues 550-559 show a composition bias toward basic residues; it reads NKKGGQKPKP.

Belongs to the methyltransferase superfamily. RRP8 family.

The protein resides in the nucleus. It localises to the nucleolus. S-adenosyl-L-methionine-dependent methyltransferase that specifically methylates the N(1) position of a conserved adenine in helix 25.1 in 25S rRNA. Required both for ribosomal 40S and 60S subunits biogenesis. Required for efficient pre-rRNA cleavage at site A2. This chain is 25S rRNA (adenine-N(1))-methyltransferase (RPR8), found in Chaetomium thermophilum (strain DSM 1495 / CBS 144.50 / IMI 039719) (Thermochaetoides thermophila).